We begin with the raw amino-acid sequence, 434 residues long: Prenyltransferase fogH (434 aa).

E86 contacts L-tryptophan. Substrate-binding residues include R101, R248, K250, Y252, and Y346.

It belongs to the tryptophan dimethylallyltransferase family.

The protein operates within secondary metabolite biosynthesis. Functionally, prenyltransferase; part of the gene cluster that mediates the biosynthesis of flavoglaucin and congeners (including aspergin, dihydroauroglaucin and auroglaucin), prenylated salicylaldehyde derivatives carrying a saturated or an unsaturated C-7 side chain. The PKS fogA releases the carboxylic acid (8E,10E,12E)-3,5,7-trihydroxytetradeca-8,10,12-trienoic acid as its product, as well as derivatives with one and two double bonds. FogA is indeed able to reduce the initial triketide, thus being at least partially responsible for the differently saturated heptyl side chains of flavoglaucin congeners. The oxidoreductases fogB, fogC and fogD modify the nascent polyketide in fogA-bound form and, together, fogA, fogB, fogC and fogD are necessary for the formation of the aromatic core and the cyclized PKS products are released as salicyl alcohols. In particular, fogB is responsible for oxidation of a hydroxyl group or reduction of remaining double bond(s) at the C-7 residue whereas fogD is probably involved in the reductive release of the modified PKS products. The cytochrome P450 monooxygenase fogE is then responsible for the hydroxylation at C-3 of the benzene ring. The fogE products are substrates of the prenyltransferase fogH and the prenylated benzyl alcohols are subsequently oxidized by the fogF to produce the final aryl aldehydes flavoglaucin and congeners. The short-chain dehydrogenase fogG does not seem to be involved in the biosynthesis of the prenylated salicylaldehyde derivatives. This Aspergillus ruber (strain CBS 135680) protein is Prenyltransferase fogH.